A 176-amino-acid chain; its full sequence is Large ribosomal subunit protein uL10 (176 aa).

It belongs to the universal ribosomal protein uL10 family. As to quaternary structure, part of the ribosomal stalk of the 50S ribosomal subunit. The N-terminus interacts with L11 and the large rRNA to form the base of the stalk. The C-terminus forms an elongated spine to which L12 dimers bind in a sequential fashion forming a multimeric L10(L12)X complex.

Functionally, forms part of the ribosomal stalk, playing a central role in the interaction of the ribosome with GTP-bound translation factors. The protein is Large ribosomal subunit protein uL10 of Hahella chejuensis (strain KCTC 2396).